The sequence spans 371 residues: 4-hydroxyphenylpyruvate dioxygenase-like protein (371 aa).

VOC domains lie at 7 to 135 (RLCH…LLER) and 160 to 328 (RVDH…VFTK). Histidine 163, histidine 258, and glutamate 339 together coordinate Fe cation.

Belongs to the 4HPPD family. Fe cation serves as cofactor.

The protein localises to the mitochondrion. It carries out the reaction 3-(4-hydroxyphenyl)pyruvate + O2 = (S)-4-hydroxymandelate + CO2. Functionally, iron-dependent dioxygenase that catalyzes the conversion of 4-hydroxyphenylpyruvate (4-HPPA) to 4-hydroxymandelate (4-HMA) in the mitochondria, one of the steps in the biosynthesis of coenzyme Q10 from tyrosine. In Homo sapiens (Human), this protein is 4-hydroxyphenylpyruvate dioxygenase-like protein.